We begin with the raw amino-acid sequence, 323 residues long: Sphingolipid delta(4)-desaturase/C4-monooxygenase DES2 (323 aa).

Gly-2 carries N-myristoyl glycine lipidation. Transmembrane regions (helical) follow at residues 41 to 61 (PNIK…CWLV) and 68 to 88 (WLLF…TLAI). Positions 89-93 (HDISH) match the Histidine box-1 motif. The segment at 95–99 (TAFGT) is required for C4-hydroxylase activity. The Histidine box-2 signature appears at 128 to 132 (HVDHH). A helical membrane pass occupies residues 200-220 (IFALWGIKAIVYLLASSLLGL). A Histidine box-3 motif is present at residues 259–263 (HVEHH).

The protein belongs to the fatty acid desaturase type 1 family. DEGS subfamily.

The protein localises to the endoplasmic reticulum membrane. It carries out the reaction a dihydroceramide + 2 Fe(II)-[cytochrome b5] + O2 + 2 H(+) = a phytoceramide + 2 Fe(III)-[cytochrome b5] + H2O. The enzyme catalyses an N-acylsphinganine + 2 Fe(II)-[cytochrome b5] + O2 + 2 H(+) = an N-acylsphing-4-enine + 2 Fe(III)-[cytochrome b5] + 2 H2O. It catalyses the reaction N-octanoylsphinganine + 2 Fe(II)-[cytochrome b5] + O2 + 2 H(+) = N-octanoyl-4-hydroxysphinganine + 2 Fe(III)-[cytochrome b5] + H2O. The catalysed reaction is an N-acylsphinganine + 2 Fe(II)-[cytochrome b5] + O2 + 2 H(+) = an N-acyl-(4R)-4-hydroxysphinganine + 2 Fe(III)-[cytochrome b5] + H2O. Its pathway is membrane lipid metabolism; sphingolipid biosynthesis. Its function is as follows. Bifunctional enzyme which acts both as a sphingolipid delta(4)-desaturase and a sphingolipid C4-monooxygenase. This Rattus norvegicus (Rat) protein is Sphingolipid delta(4)-desaturase/C4-monooxygenase DES2.